Here is a 62-residue protein sequence, read N- to C-terminus: Large ribosomal subunit protein uL29 (62 aa).

Belongs to the universal ribosomal protein uL29 family.

This is Large ribosomal subunit protein uL29 from Syntrophotalea carbinolica (strain DSM 2380 / NBRC 103641 / GraBd1) (Pelobacter carbinolicus).